A 114-amino-acid polypeptide reads, in one-letter code: Phosphoribosyl-AMP cyclohydrolase (114 aa).

Aspartate 76 provides a ligand contact to Mg(2+). Residue cysteine 77 participates in Zn(2+) binding. 2 residues coordinate Mg(2+): aspartate 78 and aspartate 80. 2 residues coordinate Zn(2+): cysteine 93 and cysteine 100.

It belongs to the PRA-CH family. As to quaternary structure, homodimer. Mg(2+) is required as a cofactor. It depends on Zn(2+) as a cofactor.

The protein localises to the cytoplasm. It carries out the reaction 1-(5-phospho-beta-D-ribosyl)-5'-AMP + H2O = 1-(5-phospho-beta-D-ribosyl)-5-[(5-phospho-beta-D-ribosylamino)methylideneamino]imidazole-4-carboxamide. It participates in amino-acid biosynthesis; L-histidine biosynthesis; L-histidine from 5-phospho-alpha-D-ribose 1-diphosphate: step 3/9. Its function is as follows. Catalyzes the hydrolysis of the adenine ring of phosphoribosyl-AMP. This chain is Phosphoribosyl-AMP cyclohydrolase, found in Streptococcus gordonii (strain Challis / ATCC 35105 / BCRC 15272 / CH1 / DL1 / V288).